Here is a 291-residue protein sequence, read N- to C-terminus: Bifunctional protein FolD (291 aa).

NADP(+) contacts are provided by residues 166–168 (GAG), isoleucine 191, and isoleucine 232.

Belongs to the tetrahydrofolate dehydrogenase/cyclohydrolase family. As to quaternary structure, homodimer.

It catalyses the reaction (6R)-5,10-methylene-5,6,7,8-tetrahydrofolate + NADP(+) = (6R)-5,10-methenyltetrahydrofolate + NADPH. The enzyme catalyses (6R)-5,10-methenyltetrahydrofolate + H2O = (6R)-10-formyltetrahydrofolate + H(+). Its pathway is one-carbon metabolism; tetrahydrofolate interconversion. Its function is as follows. Catalyzes the oxidation of 5,10-methylenetetrahydrofolate to 5,10-methenyltetrahydrofolate and then the hydrolysis of 5,10-methenyltetrahydrofolate to 10-formyltetrahydrofolate. This Aquifex aeolicus (strain VF5) protein is Bifunctional protein FolD.